A 356-amino-acid polypeptide reads, in one-letter code: tRNA-specific 2-thiouridylase MnmA (356 aa).

ATP is bound by residues Ala-6–Ser-13 and Leu-32. Cys-101 functions as the Nucleophile in the catalytic mechanism. Cys-101 and Cys-193 are oxidised to a cystine. Gly-125 serves as a coordination point for ATP. Residues Lys-143–Gln-145 are interaction with tRNA. Cys-193 serves as the catalytic Cysteine persulfide intermediate.

The protein belongs to the MnmA/TRMU family.

Its subcellular location is the cytoplasm. The enzyme catalyses S-sulfanyl-L-cysteinyl-[protein] + uridine(34) in tRNA + AH2 + ATP = 2-thiouridine(34) in tRNA + L-cysteinyl-[protein] + A + AMP + diphosphate + H(+). Functionally, catalyzes the 2-thiolation of uridine at the wobble position (U34) of tRNA, leading to the formation of s(2)U34. The protein is tRNA-specific 2-thiouridylase MnmA of Mycolicibacterium smegmatis (strain ATCC 700084 / mc(2)155) (Mycobacterium smegmatis).